The primary structure comprises 276 residues: Membrane protein insertase YidC 2 (276 aa).

The signal sequence occupies residues 1-22; it reads MGVKKKLKLTSLLGLSLLIMTA. Cysteine 23 is lipidated: N-palmitoyl cysteine. A lipid anchor (S-diacylglycerol cysteine) is attached at cysteine 23. A run of 4 helical transmembrane segments spans residues 58–78, 130–150, 169–189, and 207–227; these read ISIG…LLPV, SDSL…FQAL, VDTT…STWL, and GIPV…ALYW.

Belongs to the OXA1/ALB3/YidC family. Type 2 subfamily. Interacts with KhpB (also called EloR/Jag).

It is found in the cell membrane. Its function is as follows. Required for the insertion and/or proper folding and/or complex formation of integral membrane proteins into the membrane. Involved in integration of membrane proteins that insert both dependently and independently of the Sec translocase complex, as well as at least some lipoproteins. The sequence is that of Membrane protein insertase YidC 2 from Streptococcus pneumoniae (strain ATCC BAA-255 / R6).